The following is a 137-amino-acid chain: Small ribosomal subunit protein uS12 (137 aa).

The residue at position 102 (D102) is a 3-methylthioaspartic acid.

Belongs to the universal ribosomal protein uS12 family. Part of the 30S ribosomal subunit. Contacts proteins S8 and S17. May interact with IF1 in the 30S initiation complex.

Functionally, with S4 and S5 plays an important role in translational accuracy. Its function is as follows. Interacts with and stabilizes bases of the 16S rRNA that are involved in tRNA selection in the A site and with the mRNA backbone. Located at the interface of the 30S and 50S subunits, it traverses the body of the 30S subunit contacting proteins on the other side and probably holding the rRNA structure together. The combined cluster of proteins S8, S12 and S17 appears to hold together the shoulder and platform of the 30S subunit. The chain is Small ribosomal subunit protein uS12 from Mycoplasmopsis agalactiae (strain NCTC 10123 / CIP 59.7 / PG2) (Mycoplasma agalactiae).